The chain runs to 436 residues: Proteasome-activating nucleotidase (436 aa).

Positions 15–97 (EELCRLYRSL…LKSESEQLRS (83 aa)) form a coiled coil. ATP is bound by residues 222–227 (GTGKTL) and H361. Residues 434 to 436 (MFA) are docks into pockets in the proteasome alpha-ring to cause gate opening.

Belongs to the AAA ATPase family. Homohexamer. The hexameric complex has a two-ring architecture resembling a top hat that caps the 20S proteasome core at one or both ends. Upon ATP-binding, the C-terminus of PAN interacts with the alpha-rings of the proteasome core by binding to the intersubunit pockets.

It localises to the cytoplasm. ATPase which is responsible for recognizing, binding, unfolding and translocation of substrate proteins into the archaeal 20S proteasome core particle. Is essential for opening the gate of the 20S proteasome via an interaction with its C-terminus, thereby allowing substrate entry and access to the site of proteolysis. Thus, the C-termini of the proteasomal ATPase function like a 'key in a lock' to induce gate opening and therefore regulate proteolysis. Unfolding activity requires energy from ATP hydrolysis, whereas ATP binding alone promotes ATPase-20S proteasome association which triggers gate opening, and supports translocation of unfolded substrates. This chain is Proteasome-activating nucleotidase, found in Methanoregula boonei (strain DSM 21154 / JCM 14090 / 6A8).